Reading from the N-terminus, the 354-residue chain is Probable DNA repair protein RAD51 homolog 4 (354 aa).

115-122 provides a ligand contact to ATP; it reads GNTSCGKT.

It belongs to the RecA family. RAD51 subfamily.

Its subcellular location is the nucleus. Involved in the homologous recombination repair (HRR) pathway of double-stranded DNA breaks arising during DNA replication or induced by DNA-damaging agents. The protein is Probable DNA repair protein RAD51 homolog 4 (rad51d) of Dictyostelium discoideum (Social amoeba).